Here is a 372-residue protein sequence, read N- to C-terminus: tRNA-specific 2-thiouridylase MnmA (372 aa).

ATP contacts are provided by residues Gly-16 to Ser-23 and Met-42. The segment at Asn-102 to Asp-104 is interaction with target base in tRNA. Cys-107 acts as the Nucleophile in catalysis. Cys-107 and Cys-205 are joined by a disulfide. An ATP-binding site is contributed by Gly-132. Positions Lys-155–Gln-157 are interaction with tRNA. Catalysis depends on Cys-205, which acts as the Cysteine persulfide intermediate. An interaction with tRNA region spans residues Arg-317–Tyr-318.

It belongs to the MnmA/TRMU family.

It is found in the cytoplasm. It carries out the reaction S-sulfanyl-L-cysteinyl-[protein] + uridine(34) in tRNA + AH2 + ATP = 2-thiouridine(34) in tRNA + L-cysteinyl-[protein] + A + AMP + diphosphate + H(+). Its function is as follows. Catalyzes the 2-thiolation of uridine at the wobble position (U34) of tRNA, leading to the formation of s(2)U34. The protein is tRNA-specific 2-thiouridylase MnmA of Shewanella sp. (strain W3-18-1).